Consider the following 421-residue polypeptide: TITAN-like protein (421 aa).

The C2H2-type 1; degenerate zinc finger occupies 11 to 32; that stretch reads EFCTVCRFHHDQGSRHKYFPRH. The C2H2-type 2; degenerate zinc-finger motif lies at 70 to 100; the sequence is VWCVFCDEDIVELGSSFACSKAINHFASSDH. The interval 279–306 is disordered; sequence ISSSHSTDAGGNVHSGAPPPWLDANDGD. 2 short sequence motifs (nuclear localization signal) span residues 328–335 and 377–384; these read NRKLNPNR and TRKESRKE. The interval 376–421 is disordered; that stretch reads GTRKESRKEFEKEKRKLVKTESISTESEPVKIQPYISKRARRESGE. The segment covering 377 to 389 has biased composition (basic and acidic residues); it reads TRKESRKEFEKEK.

As to expression, also present in cotyledons, hypocotyls, stems, veins of sepals and stigmas, and actively dividing tissues such as shoot apical meristem, root tips and emerging true leaves. Weak expression in petals and anthers, and not detected in mature leaves. In seeds, expressed in both the endosperm and embryo.

It is found in the nucleus. Key regulator for endosperm and embryo nuclear divisions. This is TITAN-like protein from Arabidopsis thaliana (Mouse-ear cress).